The following is a 1795-amino-acid chain: MNLQNSHSKKYVLTFFMSTCLLTSSFLSTSARAASFKDLVSKTPAWEKHNSTQQQNIWKDLTPNEKIKKWQEAALVPSFTQAQNDLGIKYKETDLSSFLDNTRHKARQARAEILLYIERVKQQDFDTKKQAYINQGVVPTDIEAATNLGISYDPSKIDNNVEHDQKVRRAEKDKKAVIELYVSSINRGIKYKHYVDNDIIPEIQEVRTALNMNKDDAQSFVASIRTEIMENAKGQYIADSHIPTEKELKKKFGISRDDNRDGYIKSIRLKVMDKEKPQYIADSHIPTEKELEQKFGADKGEATNYIASIATQMMLDKKSYYIDNNIIPNADELMNEFKIGPVKATSYINQIRAGIEANQFLNNNDTTKPSTGRSQKKSGSKNDHWYMSNQSINNTGTSARIVTGREKKQRYFFDPISTFKTYFNTKASKGNLTQSQHNINRIIQQEENIEEFKNLIKTDPIAALTLQVDSSYKQEAVTTILSDFNDDTIQRVLFSNDKGKLDFNTNIDVKNRPILQELLENSSSEEKTKFAERIQDYATRNISNSQFEEKARLDLIKLAASKDKSSVENFLTLQLELKNRMQPYVVNSVYILTPEIVKEINIELKNKGLIRDSLTKDYMIKLAKEVNNHTLNSVIKVILSDSKILSNETNKILGLAVSNNANNLEQTQSGIPNPPPLPLNGGIPNPPPLPLNGSMPPPPLHSQGFSSNSKHFDLNQLQTEYPHIHSLYVQFTHNTTVQSKAPLQPTASSATSTGRSTPETAYAKLYAEYRTETGGTKANDLQDQLIKRQADLTNVIRQILTESYANQGADEKTLLNLFSISTPEIAEKAKEAFNTLAQDQYIKDITVNGKKTITSEEIIKNLFNEDTDDAIKRILLSSCKISEELKRPIKLEFNKSELIRELQGKQNPFKQLEFAYINTKNFDQDIFGNRIDELINNPNILTIVQQATFLTKEDTNLRKTINSDQAQAKLDDLRTAILSTIKIEELITANLPQHDFIAIVKEKDPELLKEFLKATTLTVTGNNNLDQLRLALPSFTGMSNEQIRILSNKLKMSIILKALKECSQEKATQYIHTGNMPPPPPPPPPLPDSQDLELAYLKSLGITKANTSTFKTTPKTYHFSSDIALRYKEFTLSGQKSAGYKAKYSDADLLKKAIVESVAFEHSKNLSKAHQNNKYFEQIQKAVNTMYSSFIGHRTELEQKIHNIYTSKLLELTKDKEFIKYVEDNIILNKKLTKAFTSADSDFIDSRTELEQKIHNIYIQQLTKYPEEEVKEAFNTASLDFIGPRTEIGQEVHNIYKSQLLELTKDTELCLFTQQVLAEATELEQKYGSDIQSENSNNEKKVERLDQEKLQLFKQENEATNDESSTKDDTQPEDSNKKSEQSDSKTALSPRLLSSNDSKNDKSSDDKKSLLALRSSDEDDTGYATDEEELEESNSTTDEELKKDVVLESEDEAIDVSFKTEAITEQDEVTQRQQVSDDTSGKVAILVQATSTLHKPVHYNINDRLTVAAIGAGDEETSINRGVWISGLYGINKQRIWKNIPKYQNRTTGITIGTDAEFINSHDVIGIAYSRLESQIKYNKKLGKTTVNGHLLSIYSLKELIKGFSLQTITSYGHNYIKNRSKNINNIIGKYQNNSLSFQTLLNYKYRTKYDLHFIPNIGFQYDYSRASNYKEYNVDIENLMIQKKSNQLFESSLGGKIVFKPIVTTNNIVLTPSLYGNIEHHFNNKNTKVNAKATFKGQTLQETIITLKQPKLGYNIGSNILMSRKNINVLLEYNYYTHRKYQSHQGLIKLKVNL.

Positions 1 to 33 (MNLQNSHSKKYVLTFFMSTCLLTSSFLSTSARA) are cleaved as a signal peptide. The segment covering 360–373 (FLNNNDTTKPSTGR) has biased composition (polar residues). Disordered stretches follow at residues 360–391 (FLNN…SNQS), 664–709 (LEQT…SSNS), and 1354–1441 (KQEN…DEEL). A compositionally biased stretch (pro residues) spans 672 to 700 (PNPPPLPLNGGIPNPPPLPLNGSMPPPPL). 2 stretches are compositionally biased toward basic and acidic residues: residues 1364–1383 (SSTK…EQSD) and 1398–1409 (SKNDKSSDDKKS). Positions 1417-1432 (DEDDTGYATDEEELEE) are enriched in acidic residues. Residues 1516-1795 (ETSINRGVWI…QGLIKLKVNL (280 aa)) form the Autotransporter domain.

It localises to the cell outer membrane. This is Putative surface cell antigen sca2 (sca2) from Rickettsia conorii (strain ATCC VR-613 / Malish 7).